A 520-amino-acid polypeptide reads, in one-letter code: GMP synthase [glutamine-hydrolyzing] (520 aa).

In terms of domain architecture, Glutamine amidotransferase type-1 spans 9–202; sequence TVLIVDFGSQ…IHNIAGIKGD (194 aa). The active-site Nucleophile is the Cys-86. Residues His-176 and Glu-178 contribute to the active site. The GMPS ATP-PPase domain occupies 203 to 395; that stretch reads WSMSAYRAKA…LGLPDSFIGR (193 aa). 230 to 236 is a binding site for ATP; sequence SGGVDSS.

Homodimer.

The catalysed reaction is XMP + L-glutamine + ATP + H2O = GMP + L-glutamate + AMP + diphosphate + 2 H(+). The protein operates within purine metabolism; GMP biosynthesis; GMP from XMP (L-Gln route): step 1/1. Its function is as follows. Catalyzes the synthesis of GMP from XMP. This Rhizobium rhizogenes (strain K84 / ATCC BAA-868) (Agrobacterium radiobacter) protein is GMP synthase [glutamine-hydrolyzing].